We begin with the raw amino-acid sequence, 88 residues long: Large ribosomal subunit protein bL27 (88 aa).

Positions 1–24 are disordered; it reads MAHKKAGGSSRNGRDSAGQRRGVK.

It belongs to the bacterial ribosomal protein bL27 family.

This is Large ribosomal subunit protein bL27 from Syntrophobacter fumaroxidans (strain DSM 10017 / MPOB).